Consider the following 479-residue polypeptide: Proline--tRNA ligase (479 aa).

Belongs to the class-II aminoacyl-tRNA synthetase family. ProS type 3 subfamily. In terms of assembly, homodimer.

The protein resides in the cytoplasm. The catalysed reaction is tRNA(Pro) + L-proline + ATP = L-prolyl-tRNA(Pro) + AMP + diphosphate. Functionally, catalyzes the attachment of proline to tRNA(Pro) in a two-step reaction: proline is first activated by ATP to form Pro-AMP and then transferred to the acceptor end of tRNA(Pro). In Lachnospira eligens (strain ATCC 27750 / DSM 3376 / VPI C15-48 / C15-B4) (Eubacterium eligens), this protein is Proline--tRNA ligase.